Reading from the N-terminus, the 89-residue chain is Small ribosomal subunit protein uS15 (89 aa).

A compositionally biased stretch (basic and acidic residues) spans 1-10 (MPLNTEKKQE). Positions 1-22 (MPLNTEKKQELINSHQTHATDT) are disordered. Over residues 11–22 (LINSHQTHATDT) the composition is skewed to polar residues.

Belongs to the universal ribosomal protein uS15 family. As to quaternary structure, part of the 30S ribosomal subunit. Forms a bridge to the 50S subunit in the 70S ribosome, contacting the 23S rRNA.

Its function is as follows. One of the primary rRNA binding proteins, it binds directly to 16S rRNA where it helps nucleate assembly of the platform of the 30S subunit by binding and bridging several RNA helices of the 16S rRNA. Forms an intersubunit bridge (bridge B4) with the 23S rRNA of the 50S subunit in the ribosome. This Synechococcus sp. (strain RCC307) protein is Small ribosomal subunit protein uS15.